Here is a 222-residue protein sequence, read N- to C-terminus: WAP four-disulfide core domain protein 1 (222 aa).

The N-terminal stretch at 1–32 (MDSRMLSDQRFCRRIFAAALCVLVLLADSGCA) is a signal peptide. The WAP domain occupies 61–110 (HYQKNDRCPPPPQTLPDRACEVPSCRSDSECERHKRCCYNGCIYACLESV). 4 cysteine pairs are disulfide-bonded: Cys68–Cys98, Cys80–Cys102, Cys85–Cys97, and Cys91–Cys106.

It is found in the secreted. Functionally, has growth inhibitory activity. The protein is WAP four-disulfide core domain protein 1 (WFDC1) of Gallus gallus (Chicken).